The primary structure comprises 224 residues: Mammalian ependymin-related protein 1 (224 aa).

The signal sequence occupies residues 1–37 (MLTRAPRRLVQGPRETWLLGGLWVWILCGLGMAGSPG). 3 cysteine pairs are disulfide-bonded: cysteine 42/cysteine 172, cysteine 88/cysteine 222, and cysteine 113/cysteine 210. Residues asparagine 130 and asparagine 182 are each glycosylated (N-linked (GlcNAc...) asparagine).

This sequence belongs to the ependymin family. As to quaternary structure, homodimer. N-glycosylated; the glycan contains mannose-6-phosphate moieties. In terms of tissue distribution, detected in brain (at protein level).

Its subcellular location is the lysosome lumen. It is found in the secreted. Binds anionic lipids and gangliosides at acidic pH. In Rattus norvegicus (Rat), this protein is Mammalian ependymin-related protein 1 (Epdr1).